A 790-amino-acid polypeptide reads, in one-letter code: Endonuclease MutS2 (790 aa).

334 to 341 (GPNTGGKT) is a binding site for ATP. Residues 715 to 790 (IDVRGQNLEE…GMGVTIVHLK (76 aa)) form the Smr domain.

The protein belongs to the DNA mismatch repair MutS family. MutS2 subfamily. Homodimer. Binds to stalled ribosomes, contacting rRNA.

Its function is as follows. Endonuclease that is involved in the suppression of homologous recombination and thus may have a key role in the control of bacterial genetic diversity. Functionally, acts as a ribosome collision sensor, splitting the ribosome into its 2 subunits. Detects stalled/collided 70S ribosomes which it binds and splits by an ATP-hydrolysis driven conformational change. Acts upstream of the ribosome quality control system (RQC), a ribosome-associated complex that mediates the extraction of incompletely synthesized nascent chains from stalled ribosomes and their subsequent degradation. Probably generates substrates for RQC. The protein is Endonuclease MutS2 of Alkaliphilus oremlandii (strain OhILAs) (Clostridium oremlandii (strain OhILAs)).